We begin with the raw amino-acid sequence, 273 residues long: Urease accessory protein UreD (273 aa).

Belongs to the UreD family. UreD, UreF and UreG form a complex that acts as a GTP-hydrolysis-dependent molecular chaperone, activating the urease apoprotein by helping to assemble the nickel containing metallocenter of UreC. The UreE protein probably delivers the nickel.

The protein resides in the cytoplasm. Functionally, required for maturation of urease via the functional incorporation of the urease nickel metallocenter. This chain is Urease accessory protein UreD, found in Rhizobium johnstonii (strain DSM 114642 / LMG 32736 / 3841) (Rhizobium leguminosarum bv. viciae).